We begin with the raw amino-acid sequence, 387 residues long: ATP phosphoribosyltransferase regulatory subunit (387 aa).

The protein belongs to the class-II aminoacyl-tRNA synthetase family. HisZ subfamily. In terms of assembly, heteromultimer composed of HisG and HisZ subunits.

It is found in the cytoplasm. It functions in the pathway amino-acid biosynthesis; L-histidine biosynthesis; L-histidine from 5-phospho-alpha-D-ribose 1-diphosphate: step 1/9. Functionally, required for the first step of histidine biosynthesis. May allow the feedback regulation of ATP phosphoribosyltransferase activity by histidine. This Psychrobacter cryohalolentis (strain ATCC BAA-1226 / DSM 17306 / VKM B-2378 / K5) protein is ATP phosphoribosyltransferase regulatory subunit.